Here is a 468-residue protein sequence, read N- to C-terminus: Beta-monoglucosyldiacylglycerol synthase (468 aa).

Transmembrane regions (helical) follow at residues 51-71 (AALVLTIVWSGTIALHLVSWG), 72-92 (SIFILGLTTVLGIHALGVVFA), 358-378 (MLMFMLTMYILPTAAIPDLLM), and 387-407 (MLGPVTGLSVTMSVVGMFAGL).

It belongs to the glycosyltransferase 2 family. Mg(2+) is required as a cofactor.

It is found in the membrane. The catalysed reaction is a 1,2-diacyl-sn-glycerol + UDP-alpha-D-glucose = a 1,2-diacyl-3-O-(beta-D-glucopyranosyl)-sn-glycerol + UDP + H(+). Its function is as follows. Glucosyltransferase involved in the biosynthesis of the non-bilayer-forming membrane lipid beta-monoglucosyldiacylglycerol which contributes to regulate the properties and stability of the membrane. Catalyzes the transfer of a glucosyl residue from UDP-Glc to diacylglycerol (DAG) acceptor to form the corresponding beta-glucosyl-DAG (1,2-diacyl-3-O-(beta-D-glucopyranosyl)-sn-glycerol). It can only use UDP-Glc as sugar donor. Two types of DAG (dipalmitoyl-DAG (DPDAG) and 1-oleoyl-2-palmitoyl-DAG (OPDAG)) can be used as sugar acceptors, but OPDAG is preferred. In Nostoc sp. (strain PCC 7120 / SAG 25.82 / UTEX 2576), this protein is Beta-monoglucosyldiacylglycerol synthase.